We begin with the raw amino-acid sequence, 125 residues long: Large ribosomal subunit protein bL21 (125 aa).

The protein belongs to the bacterial ribosomal protein bL21 family. In terms of assembly, part of the 50S ribosomal subunit. Contacts protein L20.

In terms of biological role, this protein binds to 23S rRNA in the presence of protein L20. This is Large ribosomal subunit protein bL21 from Synechococcus sp. (strain CC9311).